We begin with the raw amino-acid sequence, 203 residues long: Holliday junction branch migration complex subunit RuvA (203 aa).

The domain I stretch occupies residues methionine 1–asparagine 64. The domain II stretch occupies residues asparagine 65 to proline 142. A flexible linker region spans residues alanine 143–proline 154. A domain III region spans residues alanine 155–leucine 203.

It belongs to the RuvA family. Homotetramer. Forms an RuvA(8)-RuvB(12)-Holliday junction (HJ) complex. HJ DNA is sandwiched between 2 RuvA tetramers; dsDNA enters through RuvA and exits via RuvB. An RuvB hexamer assembles on each DNA strand where it exits the tetramer. Each RuvB hexamer is contacted by two RuvA subunits (via domain III) on 2 adjacent RuvB subunits; this complex drives branch migration. In the full resolvosome a probable DNA-RuvA(4)-RuvB(12)-RuvC(2) complex forms which resolves the HJ.

The protein localises to the cytoplasm. In terms of biological role, the RuvA-RuvB-RuvC complex processes Holliday junction (HJ) DNA during genetic recombination and DNA repair, while the RuvA-RuvB complex plays an important role in the rescue of blocked DNA replication forks via replication fork reversal (RFR). RuvA specifically binds to HJ cruciform DNA, conferring on it an open structure. The RuvB hexamer acts as an ATP-dependent pump, pulling dsDNA into and through the RuvAB complex. HJ branch migration allows RuvC to scan DNA until it finds its consensus sequence, where it cleaves and resolves the cruciform DNA. The sequence is that of Holliday junction branch migration complex subunit RuvA from Shigella flexneri serotype 5b (strain 8401).